The chain runs to 283 residues: 2-dehydro-3-deoxyphosphooctonate aldolase (283 aa).

This sequence belongs to the KdsA family.

It localises to the cytoplasm. The catalysed reaction is D-arabinose 5-phosphate + phosphoenolpyruvate + H2O = 3-deoxy-alpha-D-manno-2-octulosonate-8-phosphate + phosphate. Its pathway is carbohydrate biosynthesis; 3-deoxy-D-manno-octulosonate biosynthesis; 3-deoxy-D-manno-octulosonate from D-ribulose 5-phosphate: step 2/3. It functions in the pathway bacterial outer membrane biogenesis; lipopolysaccharide biosynthesis. The protein is 2-dehydro-3-deoxyphosphooctonate aldolase of Shewanella frigidimarina (strain NCIMB 400).